The following is a 553-amino-acid chain: CTP synthase (553 aa).

The tract at residues 1–277 (MPTEPETDYD…DQYVMEELDI (277 aa)) is amidoligase domain. CTP is bound at residue serine 26. Serine 26 contributes to the UTP binding site. Residues 27 to 32 (GLGKGI) and aspartate 84 each bind ATP. Residues aspartate 84 and glutamate 152 each contribute to the Mg(2+) site. CTP contacts are provided by residues 159–161 (DIE), 198–203 (KTKPTQ), and lysine 234. UTP-binding positions include 198–203 (KTKPTQ) and lysine 234. The Glutamine amidotransferase type-1 domain maps to 307-544 (LVGKYDLEDA…LEAVLGDDPH (238 aa)). Position 364 (glycine 364) interacts with L-glutamine. Residue cysteine 391 is the Nucleophile; for glutamine hydrolysis of the active site. Residues 392-395 (LGFQ), glutamate 415, and arginine 472 each bind L-glutamine. Active-site residues include histidine 517 and glutamate 519.

It belongs to the CTP synthase family. In terms of assembly, homotetramer.

The enzyme catalyses UTP + L-glutamine + ATP + H2O = CTP + L-glutamate + ADP + phosphate + 2 H(+). It catalyses the reaction L-glutamine + H2O = L-glutamate + NH4(+). It carries out the reaction UTP + NH4(+) + ATP = CTP + ADP + phosphate + 2 H(+). It functions in the pathway pyrimidine metabolism; CTP biosynthesis via de novo pathway; CTP from UDP: step 2/2. With respect to regulation, allosterically activated by GTP, when glutamine is the substrate; GTP has no effect on the reaction when ammonia is the substrate. The allosteric effector GTP functions by stabilizing the protein conformation that binds the tetrahedral intermediate(s) formed during glutamine hydrolysis. Inhibited by the product CTP, via allosteric rather than competitive inhibition. In terms of biological role, catalyzes the ATP-dependent amination of UTP to CTP with either L-glutamine or ammonia as the source of nitrogen. Regulates intracellular CTP levels through interactions with the four ribonucleotide triphosphates. This chain is CTP synthase, found in Haloarcula marismortui (strain ATCC 43049 / DSM 3752 / JCM 8966 / VKM B-1809) (Halobacterium marismortui).